We begin with the raw amino-acid sequence, 2399 residues long: Protein DOP1A (2399 aa).

Disordered regions lie at residues 556–598 (PSGQ…SSES), 619–660 (NGQG…GAAG), 1105–1124 (SDSGCSQSSAGDNFSYEVDP), 1166–1188 (SVTSELEIESLQTKSSDLDPGKE), 1234–1263 (SPCISGTAQTLNDSSVPSETKSRQRSHSSI), and 1279–1308 (ETIVKESGKQPGAKPKVKLARKKDEDKKKA). 2 stretches are compositionally biased toward low complexity: residues 629–647 (GSTSSETETASTVGSEETV) and 1105–1116 (SDSGCSQSSAGD). Composition is skewed to polar residues over residues 1166-1180 (SVTSELEIESLQTKS) and 1234-1252 (SPCISGTAQTLNDSSVPSE). Ser-1261 carries the post-translational modification Phosphoserine.

The protein belongs to the DOP1 family.

It localises to the golgi apparatus membrane. In terms of biological role, may be involved in protein traffic between late Golgi and early endosomes. This Mus musculus (Mouse) protein is Protein DOP1A (Dop1a).